The chain runs to 115 residues: Large ribosomal subunit protein bL19 (115 aa).

It belongs to the bacterial ribosomal protein bL19 family.

Functionally, this protein is located at the 30S-50S ribosomal subunit interface and may play a role in the structure and function of the aminoacyl-tRNA binding site. The polypeptide is Large ribosomal subunit protein bL19 (Desulfovibrio desulfuricans (strain ATCC 27774 / DSM 6949 / MB)).